A 30-amino-acid polypeptide reads, in one-letter code: Conopeptide Vi002 (30 aa).

Expressed by the venom gland.

The protein resides in the secreted. The chain is Conopeptide Vi002 from Conus virgo (Virgin cone).